Consider the following 87-residue polypeptide: Small ribosomal subunit protein uS17 (87 aa).

The protein belongs to the universal ribosomal protein uS17 family. As to quaternary structure, part of the 30S ribosomal subunit.

Functionally, one of the primary rRNA binding proteins, it binds specifically to the 5'-end of 16S ribosomal RNA. The sequence is that of Small ribosomal subunit protein uS17 from Heliobacterium modesticaldum (strain ATCC 51547 / Ice1).